Consider the following 203-residue polypeptide: Holliday junction branch migration complex subunit RuvA (203 aa).

The tract at residues 1–63 (MYEYLKGLVT…DTDITLFGFY (63 aa)) is domain I. The interval 64–142 (DLDEKQLFQK…DLEQSATLVG (79 aa)) is domain II. Positions 143–153 (QTAIDLGSQGD) are flexible linker. A domain III region spans residues 153–203 (DSPELSDALAALSALGYSAREVKAITPKLTDFAAQTTDQYLREGLRLLMKK).

The protein belongs to the RuvA family. In terms of assembly, homotetramer. Forms an RuvA(8)-RuvB(12)-Holliday junction (HJ) complex. HJ DNA is sandwiched between 2 RuvA tetramers; dsDNA enters through RuvA and exits via RuvB. An RuvB hexamer assembles on each DNA strand where it exits the tetramer. Each RuvB hexamer is contacted by two RuvA subunits (via domain III) on 2 adjacent RuvB subunits; this complex drives branch migration. In the full resolvosome a probable DNA-RuvA(4)-RuvB(12)-RuvC(2) complex forms which resolves the HJ.

Its subcellular location is the cytoplasm. Its function is as follows. The RuvA-RuvB-RuvC complex processes Holliday junction (HJ) DNA during genetic recombination and DNA repair, while the RuvA-RuvB complex plays an important role in the rescue of blocked DNA replication forks via replication fork reversal (RFR). RuvA specifically binds to HJ cruciform DNA, conferring on it an open structure. The RuvB hexamer acts as an ATP-dependent pump, pulling dsDNA into and through the RuvAB complex. HJ branch migration allows RuvC to scan DNA until it finds its consensus sequence, where it cleaves and resolves the cruciform DNA. The sequence is that of Holliday junction branch migration complex subunit RuvA from Latilactobacillus sakei subsp. sakei (strain 23K) (Lactobacillus sakei subsp. sakei).